A 574-amino-acid polypeptide reads, in one-letter code: Arginine--tRNA ligase (574 aa).

The short motif at proline 126 to histidine 136 is the 'HIGH' region element.

This sequence belongs to the class-I aminoacyl-tRNA synthetase family. In terms of assembly, monomer.

The protein localises to the cytoplasm. The catalysed reaction is tRNA(Arg) + L-arginine + ATP = L-arginyl-tRNA(Arg) + AMP + diphosphate. This Chloroflexus aurantiacus (strain ATCC 29366 / DSM 635 / J-10-fl) protein is Arginine--tRNA ligase.